We begin with the raw amino-acid sequence, 505 residues long: L-arabinose isomerase (505 aa).

Mn(2+) is bound by residues glutamate 308, glutamate 335, histidine 352, and histidine 453.

Belongs to the arabinose isomerase family. Mn(2+) serves as cofactor.

It carries out the reaction beta-L-arabinopyranose = L-ribulose. The protein operates within carbohydrate degradation; L-arabinose degradation via L-ribulose; D-xylulose 5-phosphate from L-arabinose (bacterial route): step 1/3. In terms of biological role, catalyzes the conversion of L-arabinose to L-ribulose. The sequence is that of L-arabinose isomerase from Bifidobacterium longum (strain DJO10A).